Consider the following 470-residue polypeptide: Negative regulator of sexual conjugation and meiosis (470 aa).

Residues 18–295 (LRFVSIIGAG…ITLPELSTLV (278 aa)) form the Protein kinase domain. ATP-binding positions include 24 to 32 (IGAGAYGVV) and Lys-47. The active-site Proton acceptor is Asp-143. Residue Ser-469 is modified to Phosphoserine.

Belongs to the protein kinase superfamily. Ser/Thr protein kinase family.

The enzyme catalyses L-seryl-[protein] + ATP = O-phospho-L-seryl-[protein] + ADP + H(+). The catalysed reaction is L-threonyl-[protein] + ATP = O-phospho-L-threonyl-[protein] + ADP + H(+). Its function is as follows. This protein is a negative regulator of both sexual conjugation and meiosis. It phosphorylates mei2. It blocks the onset of meiosis until conjugation takes place. The protein is Negative regulator of sexual conjugation and meiosis (ran1) of Schizosaccharomyces pombe (strain 972 / ATCC 24843) (Fission yeast).